The sequence spans 968 residues: RNA polymerase-associated protein RapA (968 aa).

In terms of domain architecture, Helicase ATP-binding spans Asp164–Asn334. Asp177–Thr184 serves as a coordination point for ATP. Residues Asp280–His283 carry the DEAH box motif. In terms of domain architecture, Helicase C-terminal spans Arg490–Gly662.

It belongs to the SNF2/RAD54 helicase family. RapA subfamily. Interacts with the RNAP. Has a higher affinity for the core RNAP than for the holoenzyme. Its ATPase activity is stimulated by binding to RNAP.

Functionally, transcription regulator that activates transcription by stimulating RNA polymerase (RNAP) recycling in case of stress conditions such as supercoiled DNA or high salt concentrations. Probably acts by releasing the RNAP, when it is trapped or immobilized on tightly supercoiled DNA. Does not activate transcription on linear DNA. Probably not involved in DNA repair. This Shigella boydii serotype 18 (strain CDC 3083-94 / BS512) protein is RNA polymerase-associated protein RapA.